The following is a 257-amino-acid chain: MIEFRNVSKVYPNGTKGLNNINLKIQKGEFVVMVGLSGAGKSTLLRSVNRLHEITEGEIMIEGESITAAKGKRLRRMRRDIGMIFQSFNLVKRSTVLKNVLAGRVGYHSTLRTTLGLFPKEDLELAFQSLKRVNILEKAYARADELSGGQQQRVSIARALAQEAKIILADEPVASLDPLTTKQVLDDLKKINEDFGITTIVNLHSIDLARQYATRIIGLHAGEIVFDGLVEEATDEKFAEIYGDVAQKSELLEVAVK.

Residues 2 to 246 form the ABC transporter domain; that stretch reads IEFRNVSKVY…KFAEIYGDVA (245 aa). An ATP-binding site is contributed by 35 to 42; the sequence is GLSGAGKS.

This sequence belongs to the ABC transporter superfamily. Phosphonates importer (TC 3.A.1.9.1) family. In terms of assembly, the complex is composed of two ATP-binding proteins (PhnC), two transmembrane proteins (PhnE) and a solute-binding protein (PhnD).

The protein resides in the cell membrane. The catalysed reaction is phosphonate(out) + ATP + H2O = phosphonate(in) + ADP + phosphate + H(+). Functionally, part of the ABC transporter complex PhnCDE involved in phosphonates import. Responsible for energy coupling to the transport system. The polypeptide is Phosphonates import ATP-binding protein PhnC (Bacillus thuringiensis subsp. konkukian (strain 97-27)).